The primary structure comprises 54 residues: Lectin alpha chain (54 aa).

Belongs to the leguminous lectin family. As to quaternary structure, tetramer of two alpha and two beta chains.

This Lathyrus tingitanus (Tangier pea) protein is Lectin alpha chain.